Reading from the N-terminus, the 194-residue chain is Imidazoleglycerol-phosphate dehydratase (194 aa).

It belongs to the imidazoleglycerol-phosphate dehydratase family.

It localises to the cytoplasm. It catalyses the reaction D-erythro-1-(imidazol-4-yl)glycerol 3-phosphate = 3-(imidazol-4-yl)-2-oxopropyl phosphate + H2O. Its pathway is amino-acid biosynthesis; L-histidine biosynthesis; L-histidine from 5-phospho-alpha-D-ribose 1-diphosphate: step 6/9. In Bacillus subtilis (strain 168), this protein is Imidazoleglycerol-phosphate dehydratase.